Here is a 400-residue protein sequence, read N- to C-terminus: MEVKKVVLAYSGGVDTSSCIPYLINEYGVEEVVAFAADLGQGDELEPIREKALSAGASECLVDDLVKPFIEDFAFPAIRANALYEGKYPLSTALARPLISKRLVDIAKELEADAVAHGCTGKGNDQVRFDIAIATLAPELKVLTPARQWGMSREEVIAYGERYGIPAPVSKKSPYSIDLNLLGRSVEAGPLEDISLSPPEEVYQITSSIENTPDQSQEIEIIFEGGNPIAIDGVELDPLSLIVLANQLAGKHGFGRIDMIENRVVGIKSREIYETPGLLLLIKAHQELESLTLPADVLRTKSTLETQWADLVYQGLWFSPLKNALDGFIDRTQDEVNGSVKVKLHKGNATITGRSSSQNSLYLPDFSTYGSQDKFKHDNAEGFIYIWGLPSRLWAQSKNK.

ATP-binding positions include 9-17 (AYSGGVDTS) and Ala37. Position 88 (Tyr88) interacts with L-citrulline. Gly118 is an ATP binding site. L-aspartate is bound by residues Thr120, Asn124, and Asp125. Asn124 contacts L-citrulline. L-citrulline is bound by residues Arg128, Ser176, Ser185, Glu261, and Tyr273.

It belongs to the argininosuccinate synthase family. Type 1 subfamily. As to quaternary structure, homotetramer.

Its subcellular location is the cytoplasm. It catalyses the reaction L-citrulline + L-aspartate + ATP = 2-(N(omega)-L-arginino)succinate + AMP + diphosphate + H(+). The protein operates within amino-acid biosynthesis; L-arginine biosynthesis; L-arginine from L-ornithine and carbamoyl phosphate: step 2/3. This Prochlorococcus marinus (strain MIT 9211) protein is Argininosuccinate synthase.